The primary structure comprises 444 residues: Phosphoglucosamine mutase (444 aa).

Residue Ser102 is the Phosphoserine intermediate of the active site. 4 residues coordinate Mg(2+): Ser102, Asp241, Asp243, and Asp245. Ser102 is subject to Phosphoserine.

This sequence belongs to the phosphohexose mutase family. Requires Mg(2+) as cofactor. In terms of processing, activated by phosphorylation.

It catalyses the reaction alpha-D-glucosamine 1-phosphate = D-glucosamine 6-phosphate. Functionally, catalyzes the conversion of glucosamine-6-phosphate to glucosamine-1-phosphate. This chain is Phosphoglucosamine mutase, found in Haemophilus ducreyi (strain 35000HP / ATCC 700724).